Consider the following 198-residue polypeptide: Large ribosomal subunit protein bL25 (198 aa).

It belongs to the bacterial ribosomal protein bL25 family. CTC subfamily. As to quaternary structure, part of the 50S ribosomal subunit; part of the 5S rRNA/L5/L18/L25 subcomplex. Contacts the 5S rRNA. Binds to the 5S rRNA independently of L5 and L18.

In terms of biological role, this is one of the proteins that binds to the 5S RNA in the ribosome where it forms part of the central protuberance. The polypeptide is Large ribosomal subunit protein bL25 (Bordetella avium (strain 197N)).